Here is a 246-residue protein sequence, read N- to C-terminus: 3-deoxy-manno-octulosonate cytidylyltransferase (246 aa).

This sequence belongs to the KdsB family.

It is found in the cytoplasm. It catalyses the reaction 3-deoxy-alpha-D-manno-oct-2-ulosonate + CTP = CMP-3-deoxy-beta-D-manno-octulosonate + diphosphate. It functions in the pathway nucleotide-sugar biosynthesis; CMP-3-deoxy-D-manno-octulosonate biosynthesis; CMP-3-deoxy-D-manno-octulosonate from 3-deoxy-D-manno-octulosonate and CTP: step 1/1. The protein operates within bacterial outer membrane biogenesis; lipopolysaccharide biosynthesis. Functionally, activates KDO (a required 8-carbon sugar) for incorporation into bacterial lipopolysaccharide in Gram-negative bacteria. This chain is 3-deoxy-manno-octulosonate cytidylyltransferase, found in Rickettsia conorii (strain ATCC VR-613 / Malish 7).